A 153-amino-acid polypeptide reads, in one-letter code: Subtilisin propeptide-like protein (153 aa).

Positions 1 to 27 (MKFLFAFNFFSLYIYLYEFLCIHLCGS) are cleaved as a signal peptide. Residues 127 to 153 (QISHLSEFIQYLLNKNVCIEFNQNVML) are dispensable for parasite growth in host erythrocytes.

The protein resides in the secreted. It is found in the parasitophorous vacuole lumen. It localises to the cell membrane. In terms of biological role, acts as a specific inhibitor of subtilisin-like protease SUB1. The polypeptide is Subtilisin propeptide-like protein (Plasmodium falciparum (isolate 3D7)).